The chain runs to 306 residues: 2-phosphoglycerate kinase (306 aa).

The region spanning 1–90 (MIMVQGEVSG…LWRKIRQCKE (90 aa)) is the ATP-cone domain.

The protein belongs to the 2-phosphoglycerate kinase family. The cofactor is a divalent metal cation.

It catalyses the reaction (2R)-2-phosphoglycerate + ATP = (2R)-2,3-bisphosphoglycerate + ADP + H(+). It participates in thermoadapter biosynthesis; cyclic 2,3-diphosphoglycerate biosynthesis; cyclic 2,3-diphosphoglycerate from 2-phospho-D-glycerate: step 1/2. In terms of biological role, catalyzes the phosphorylation of 2-phosphoglycerate to 2,3-diphosphoglycerate. Involved in the biosynthesis of cyclic 2,3-bisphosphoglycerate, a thermoprotectant. This Methanothermobacter thermautotrophicus (strain ATCC 29096 / DSM 1053 / JCM 10044 / NBRC 100330 / Delta H) (Methanobacterium thermoautotrophicum) protein is 2-phosphoglycerate kinase.